Here is a 285-residue protein sequence, read N- to C-terminus: Dihydropteroate synthase (285 aa).

One can recognise a Pterin-binding domain in the interval 25–271; that stretch reads TLVMGILNVT…DVKQIARMAK (247 aa). A Mg(2+)-binding site is contributed by Asn-32. (7,8-dihydropterin-6-yl)methyl diphosphate is bound by residues Thr-72, Asp-106, Asn-125, Asp-189, Lys-225, and 259–261; that span reads RVH.

The protein belongs to the DHPS family. Mg(2+) is required as a cofactor.

The enzyme catalyses (7,8-dihydropterin-6-yl)methyl diphosphate + 4-aminobenzoate = 7,8-dihydropteroate + diphosphate. The protein operates within cofactor biosynthesis; tetrahydrofolate biosynthesis; 7,8-dihydrofolate from 2-amino-4-hydroxy-6-hydroxymethyl-7,8-dihydropteridine diphosphate and 4-aminobenzoate: step 1/2. In terms of biological role, catalyzes the condensation of para-aminobenzoate (pABA) with 6-hydroxymethyl-7,8-dihydropterin diphosphate (DHPt-PP) to form 7,8-dihydropteroate (H2Pte), the immediate precursor of folate derivatives. The sequence is that of Dihydropteroate synthase (sul) from Bacillus subtilis (strain 168).